The following is a 236-amino-acid chain: Lectin CPL (236 aa).

Mn(2+) contacts are provided by Glu8 and Asp10. Residues Asp10, Tyr12, Asn14, and Asp19 each contribute to the Ca(2+) site. Asn14 serves as a coordination point for a carbohydrate. The Mn(2+) site is built by Asp19 and His24. Residues 99–100 (VY), Asp207, and Arg227 contribute to the a carbohydrate site.

This sequence belongs to the leguminous lectin family. Homotetramer; dimer of dimers. Post-translationally, concanavalin A-like lectins of the Diocleinae subtribe undergo proteolytic processing referred to as circular permutation. The propeptide is split into an N-terminal and a C-terminal part, the gamma and beta chain, respectively. These are then religated in beta-gamma order to form the mature alpha chain. The beta and gamma chains can often be detected in cell extracts. Residues 1-118 of the mature chain, as displayed here, probably constitute the beta chain in the propeptide, residues 119-236 the gamma chain.

D-mannose/D-glucose-binding lectin that also binds derivative alpha-methyl-D-mannppyranoside. Has hemagglutinating activity towards rabbit erythrocytes. The sequence is that of Lectin CPL from Bionia pedicellata (Camptosema pedicellatum).